The following is a 150-amino-acid chain: Large ribosomal subunit protein bL9 (150 aa).

Belongs to the bacterial ribosomal protein bL9 family.

Binds to the 23S rRNA. The sequence is that of Large ribosomal subunit protein bL9 from Vibrio atlanticus (strain LGP32) (Vibrio splendidus (strain Mel32)).